We begin with the raw amino-acid sequence, 370 residues long: Cap-specific mRNA (nucleoside-2'-O-)-methyltransferase 1 (370 aa).

The RrmJ-type SAM-dependent 2'-O-MTase domain maps to 87–294 (AFRNRAGHKL…ERYLVCIGFI (208 aa)). Residues Gly-130 and Asp-207 each contribute to the S-adenosyl-L-methionine site. Residue Lys-248 is the Proton acceptor of the active site.

As to quaternary structure, component of a complex composed of CBF5, GAR1, NHP2, MTR1, NOP10 and Tb11.01.8210.

The protein localises to the nucleus. It catalyses the reaction a 5'-end (N(7)-methyl 5'-triphosphoguanosine)-ribonucleoside in mRNA + S-adenosyl-L-methionine = a 5'-end (N(7)-methyl 5'-triphosphoguanosine)-(2'-O-methyl-ribonucleoside) in mRNA + S-adenosyl-L-homocysteine + H(+). Its function is as follows. S-adenosyl-L-methionine-dependent methyltransferase that mediates RNA cap1 2'-O-ribose methylation to the 5'-cap structure of spliced leader and U1 small nuclear RNAs. Methylates the ribose of the first nucleotide of a m(7)GpppG-capped RNA to produce m(7)GpppNmp (cap1). Cap1 modification is linked to higher levels of translation. Recognizes a guanosine cap on RNA independent of its N(7) methylation status. The sequence is that of Cap-specific mRNA (nucleoside-2'-O-)-methyltransferase 1 (MTR1) from Trypanosoma brucei brucei (strain 927/4 GUTat10.1).